A 202-amino-acid polypeptide reads, in one-letter code: Large ribosomal subunit protein bL25 (202 aa).

The disordered stretch occupies residues 182-202 (EVEAEETEDDEAASEGEEAAE). Residues 183 to 202 (VEAEETEDDEAASEGEEAAE) show a composition bias toward acidic residues.

It belongs to the bacterial ribosomal protein bL25 family. CTC subfamily. As to quaternary structure, part of the 50S ribosomal subunit; part of the 5S rRNA/L5/L18/L25 subcomplex. Contacts the 5S rRNA. Binds to the 5S rRNA independently of L5 and L18.

Functionally, this is one of the proteins that binds to the 5S RNA in the ribosome where it forms part of the central protuberance. This chain is Large ribosomal subunit protein bL25, found in Corynebacterium glutamicum (strain R).